Here is a 322-residue protein sequence, read N- to C-terminus: Thioredoxin reductase (322 aa).

FAD is bound by residues serine 12–alanine 15, glutamate 34–alanine 42, asparagine 51, and valine 84. Cysteine 136 and cysteine 139 form a disulfide bridge. NADP(+) contacts are provided by histidine 176, arginine 182, isoleucine 239, and tyrosine 259. Residues aspartate 279 and arginine 286–isoleucine 289 contribute to the FAD site. Position 286 (arginine 286) interacts with NADP(+).

The protein belongs to the class-II pyridine nucleotide-disulfide oxidoreductase family. As to quaternary structure, homodimer. Requires FAD as cofactor.

The protein resides in the cytoplasm. It carries out the reaction [thioredoxin]-dithiol + NADP(+) = [thioredoxin]-disulfide + NADPH + H(+). The sequence is that of Thioredoxin reductase from Streptomyces coelicolor (strain ATCC BAA-471 / A3(2) / M145).